A 424-amino-acid chain; its full sequence is Isoflavipucine cluster transcription factor ATEG_00326 (424 aa).

A DNA-binding region (zn(2)-C6 fungal-type) is located at residues 10 to 38 (CDRCHGQKLRCIHSGGGPCVRCAKAKATC). A disordered region spans residues 265 to 286 (ARMQTPEGTPERTSESSPSGPP).

The protein localises to the nucleus. Functionally, transcription factor that regulates the expression of the gene cluster that mediates the biosynthesis of isoflavipucine. This chain is Isoflavipucine cluster transcription factor ATEG_00326, found in Aspergillus terreus (strain NIH 2624 / FGSC A1156).